A 210-amino-acid chain; its full sequence is ATP-dependent Clp protease proteolytic subunit (210 aa).

Residue Ser-106 is the Nucleophile of the active site. Residue His-131 is part of the active site.

The protein belongs to the peptidase S14 family. Fourteen ClpP subunits assemble into 2 heptameric rings which stack back to back to give a disk-like structure with a central cavity, resembling the structure of eukaryotic proteasomes.

The protein resides in the cytoplasm. It carries out the reaction Hydrolysis of proteins to small peptides in the presence of ATP and magnesium. alpha-casein is the usual test substrate. In the absence of ATP, only oligopeptides shorter than five residues are hydrolyzed (such as succinyl-Leu-Tyr-|-NHMec, and Leu-Tyr-Leu-|-Tyr-Trp, in which cleavage of the -Tyr-|-Leu- and -Tyr-|-Trp bonds also occurs).. Cleaves peptides in various proteins in a process that requires ATP hydrolysis. Has a chymotrypsin-like activity. Plays a major role in the degradation of misfolded proteins. The sequence is that of ATP-dependent Clp protease proteolytic subunit from Rhodopseudomonas palustris (strain BisB18).